Reading from the N-terminus, the 488-residue chain is Bifunctional protein HldE (488 aa).

Positions 1 to 331 (MTELSALVER…VALHREDLTL (331 aa)) are ribokinase. Position 206-209 (206-209 (NRKE)) interacts with ATP. D276 is an active-site residue. Residues 358 to 488 (FTNGCFDLLH…TNTIKKMNGN (131 aa)) form a cytidylyltransferase region.

It in the N-terminal section; belongs to the carbohydrate kinase PfkB family. The protein in the C-terminal section; belongs to the cytidylyltransferase family. In terms of assembly, homodimer.

It catalyses the reaction D-glycero-beta-D-manno-heptose 7-phosphate + ATP = D-glycero-beta-D-manno-heptose 1,7-bisphosphate + ADP + H(+). It carries out the reaction D-glycero-beta-D-manno-heptose 1-phosphate + ATP + H(+) = ADP-D-glycero-beta-D-manno-heptose + diphosphate. It participates in nucleotide-sugar biosynthesis; ADP-L-glycero-beta-D-manno-heptose biosynthesis; ADP-L-glycero-beta-D-manno-heptose from D-glycero-beta-D-manno-heptose 7-phosphate: step 1/4. Its pathway is nucleotide-sugar biosynthesis; ADP-L-glycero-beta-D-manno-heptose biosynthesis; ADP-L-glycero-beta-D-manno-heptose from D-glycero-beta-D-manno-heptose 7-phosphate: step 3/4. Catalyzes the phosphorylation of D-glycero-D-manno-heptose 7-phosphate at the C-1 position to selectively form D-glycero-beta-D-manno-heptose-1,7-bisphosphate. In terms of biological role, catalyzes the ADP transfer from ATP to D-glycero-beta-D-manno-heptose 1-phosphate, yielding ADP-D-glycero-beta-D-manno-heptose. The polypeptide is Bifunctional protein HldE (Paramagnetospirillum magneticum (strain ATCC 700264 / AMB-1) (Magnetospirillum magneticum)).